The sequence spans 965 residues: Probable serine/threonine-protein kinase DDB_G0291516 (965 aa).

Positions Lys114 to Lys170 are disordered. 2 stretches are compositionally biased toward low complexity: residues Glu119–Leu136 and Ala144–Gln155. The span at Pro156 to Gln168 shows a compositional bias: pro residues. 2 ANK repeats span residues Lys271–Ile301 and Leu310–Met339. A Protein kinase domain is found at Ile459–Leu739. Residues Ile465 to Val473 and Lys486 contribute to the ATP site. The active-site Proton acceptor is Asp587. A helical membrane pass occupies residues Ile653–Ile673. Asn760, Asn765, Asn905, Asn909, Asn910, Asn914, Asn934, and Asn938 each carry an N-linked (GlcNAc...) asparagine glycan. Over residues Asn881 to Ser940 the composition is skewed to low complexity. The interval Asn881–Lys942 is disordered.

It belongs to the protein kinase superfamily. Ser/Thr protein kinase family.

The protein resides in the membrane. It catalyses the reaction L-seryl-[protein] + ATP = O-phospho-L-seryl-[protein] + ADP + H(+). The enzyme catalyses L-threonyl-[protein] + ATP = O-phospho-L-threonyl-[protein] + ADP + H(+). This Dictyostelium discoideum (Social amoeba) protein is Probable serine/threonine-protein kinase DDB_G0291516.